A 311-amino-acid polypeptide reads, in one-letter code: Aspartate carbamoyltransferase catalytic subunit (311 aa).

2 residues coordinate carbamoyl phosphate: Arg-58 and Thr-59. Residue Lys-86 coordinates L-aspartate. 3 residues coordinate carbamoyl phosphate: Arg-108, His-136, and Gln-139. Residues Arg-169 and Arg-224 each coordinate L-aspartate. Carbamoyl phosphate-binding residues include Gly-265 and Pro-266.

This sequence belongs to the aspartate/ornithine carbamoyltransferase superfamily. ATCase family. In terms of assembly, heterododecamer (2C3:3R2) of six catalytic PyrB chains organized as two trimers (C3), and six regulatory PyrI chains organized as three dimers (R2).

It carries out the reaction carbamoyl phosphate + L-aspartate = N-carbamoyl-L-aspartate + phosphate + H(+). The protein operates within pyrimidine metabolism; UMP biosynthesis via de novo pathway; (S)-dihydroorotate from bicarbonate: step 2/3. Its function is as follows. Catalyzes the condensation of carbamoyl phosphate and aspartate to form carbamoyl aspartate and inorganic phosphate, the committed step in the de novo pyrimidine nucleotide biosynthesis pathway. This is Aspartate carbamoyltransferase catalytic subunit from Geobacter sulfurreducens (strain ATCC 51573 / DSM 12127 / PCA).